Reading from the N-terminus, the 214-residue chain is Thiamine pyrophosphokinase (214 aa).

The protein belongs to the thiamine pyrophosphokinase family.

It carries out the reaction thiamine + ATP = thiamine diphosphate + AMP + H(+). The protein operates within cofactor biosynthesis; thiamine diphosphate biosynthesis; thiamine diphosphate from thiamine: step 1/1. Its function is as follows. Catalyzes the ATP-dependent phosphorylation of thiamine to thiamine pyrophosphate. Is involved in thiamine salvage. The protein is Thiamine pyrophosphokinase of Bacillus subtilis (strain 168).